The sequence spans 410 residues: Multifunctional CCA protein (410 aa).

Positions 8 and 11 each coordinate ATP. CTP contacts are provided by Gly8 and Arg11. Asp21 and Asp23 together coordinate Mg(2+). The ATP site is built by Arg91, Arg137, and Arg140. CTP contacts are provided by Arg91, Arg137, and Arg140. Residues 225-326 form the HD domain; that stretch reads SGIHTLMTLQ…LNVLKKTDAF (102 aa).

It belongs to the tRNA nucleotidyltransferase/poly(A) polymerase family. Bacterial CCA-adding enzyme type 1 subfamily. As to quaternary structure, monomer. Can also form homodimers and oligomers. Mg(2+) serves as cofactor. Requires Ni(2+) as cofactor.

It catalyses the reaction a tRNA precursor + 2 CTP + ATP = a tRNA with a 3' CCA end + 3 diphosphate. It carries out the reaction a tRNA with a 3' CCA end + 2 CTP + ATP = a tRNA with a 3' CCACCA end + 3 diphosphate. Functionally, catalyzes the addition and repair of the essential 3'-terminal CCA sequence in tRNAs without using a nucleic acid template. Adds these three nucleotides in the order of C, C, and A to the tRNA nucleotide-73, using CTP and ATP as substrates and producing inorganic pyrophosphate. tRNA 3'-terminal CCA addition is required both for tRNA processing and repair. Also involved in tRNA surveillance by mediating tandem CCA addition to generate a CCACCA at the 3' terminus of unstable tRNAs. While stable tRNAs receive only 3'-terminal CCA, unstable tRNAs are marked with CCACCA and rapidly degraded. The chain is Multifunctional CCA protein from Neisseria gonorrhoeae (strain NCCP11945).